The sequence spans 343 residues: Probable potassium channel protein 2 (343 aa).

The Cytoplasmic portion of the chain corresponds to 1 to 7; sequence METSKKL. Residues 8–28 form a helical membrane-spanning segment; sequence VIVAVLSITLILTYAYLISII. Residues 29 to 61 lie on the Extracellular side of the membrane; the sequence is EGVDYFTALYFSVITITTTGYGDFTPKTFLGRT. A Selectivity filter motif is present at residues 46–51; that stretch reads TTGYGD. Residues 62–82 form a helical membrane-spanning segment; that stretch reads LTVVYLCVGVGIVMYLFSLIA. At 83-343 the chain is on the cytoplasmic side; sequence EFIVEGKFEE…NLVKKKKKKL (261 aa). Residues 107–227 form the RCK N-terminal domain; that stretch reads KDHYIICGYG…KIAGANRVVS (121 aa). An RCK C-terminal domain is found at 253 to 338; it reads IKIAKDEYEE…LKYLENLVKK (86 aa).

The protein resides in the cell membrane. In terms of biological role, probable potassium channel protein. The polypeptide is Probable potassium channel protein 2 (Methanocaldococcus jannaschii (strain ATCC 43067 / DSM 2661 / JAL-1 / JCM 10045 / NBRC 100440) (Methanococcus jannaschii)).